Consider the following 932-residue polypeptide: Protein translocase subunit SecA (932 aa).

Residues Q87, 105 to 109, and D515 each bind ATP; that span reads GEGKT. Residues C916, C918, C927, and H928 each coordinate Zn(2+).

This sequence belongs to the SecA family. As to quaternary structure, monomer and homodimer. Part of the essential Sec protein translocation apparatus which comprises SecA, SecYEG and auxiliary proteins SecDF-YajC and YidC. Zn(2+) is required as a cofactor.

Its subcellular location is the cell inner membrane. The protein resides in the cytoplasm. The catalysed reaction is ATP + H2O + cellular proteinSide 1 = ADP + phosphate + cellular proteinSide 2.. In terms of biological role, part of the Sec protein translocase complex. Interacts with the SecYEG preprotein conducting channel. Has a central role in coupling the hydrolysis of ATP to the transfer of proteins into and across the cell membrane, serving both as a receptor for the preprotein-SecB complex and as an ATP-driven molecular motor driving the stepwise translocation of polypeptide chains across the membrane. The chain is Protein translocase subunit SecA from Burkholderia orbicola (strain MC0-3).